Reading from the N-terminus, the 615-residue chain is Putative DNA ligase 205R (615 aa).

K101 (N6-AMP-lysine intermediate) is an active-site residue.

Belongs to the NAD-dependent DNA ligase family.

It carries out the reaction NAD(+) + (deoxyribonucleotide)n-3'-hydroxyl + 5'-phospho-(deoxyribonucleotide)m = (deoxyribonucleotide)n+m + AMP + beta-nicotinamide D-nucleotide.. Catalyzes the formation of phosphodiester linkages between 5'-phosphoryl and 3'-hydroxyl groups in double-stranded DNA using NAD as a coenzyme and as the energy source for the reaction. In Invertebrate iridescent virus 6 (IIV-6), this protein is Putative DNA ligase 205R.